A 348-amino-acid polypeptide reads, in one-letter code: Erlin-1 (348 aa).

The Cytoplasmic portion of the chain corresponds to 1–7 (MNMTQAR). The helical transmembrane segment at 8–28 (VLVAAVVGLVAVLLYASIHKI) threads the bilayer. Residues 29 to 348 (EEGHLAVYYR…NLIQNKESTG (320 aa)) are Lumenal-facing. N-linked (GlcNAc...) asparagine glycosylation occurs at Asn-108. At Lys-269 the chain carries N6-acetyllysine. The span at 321-333 (TGRESSHPSKEAL) shows a compositional bias: basic and acidic residues. A disordered region spans residues 321 to 348 (TGRESSHPSKEALEPSGENLIQNKESTG). The span at 339 to 348 (NLIQNKESTG) shows a compositional bias: polar residues.

The protein belongs to the band 7/mec-2 family. Forms a heteromeric complex with ERLIN2. In complex with ERLIN2, interacts with RNF170. Interacts with AMFR and SYVN1. In terms of processing, deubiquitinated by USP25; leading to stabilization.

It localises to the endoplasmic reticulum membrane. Its function is as follows. Component of the ERLIN1/ERLIN2 complex which mediates the endoplasmic reticulum-associated degradation (ERAD) of inositol 1,4,5-trisphosphate receptors (IP3Rs). Involved in regulation of cellular cholesterol homeostasis by regulation the SREBP signaling pathway. Binds cholesterol and may promote ER retention of the SCAP-SREBF complex. The protein is Erlin-1 of Pongo abelii (Sumatran orangutan).